The chain runs to 120 residues: Putative ferric transport system permease-like protein AfuB (120 aa).

At 1–38 (MESLPGQIDKSLDEASLSLRAGSLRTITHILLPLLRPA) the chain is on the cytoplasmic side. The ABC transmembrane type-1 domain maps to 1–102 (MESLPGQIDK…VVMLAIIFIF (102 aa)). A helical membrane pass occupies residues 39–59 (ILSALIYSFVRAITTVSAIVF). Over 60-81 (LVTPDTRVATAYILNRVEDGEY) the chain is Periplasmic. The chain crosses the membrane as a helical span at residues 82–102 (GVAIAYGSILIVVMLAIIFIF). Topologically, residues 103-120 (DWLIGESRTSRSKAKNQA) are cytoplasmic.

The protein belongs to the binding-protein-dependent transport system permease family. FbpB subfamily.

It localises to the cell inner membrane. Its function is as follows. A severely truncated paralog of the AfuB uptake protein, homologous only to the last 20% of the intact protein in Actinobacillus. The sequence is that of Putative ferric transport system permease-like protein AfuB (afuB) from Escherichia coli (strain K12).